Consider the following 264-residue polypeptide: 2-dehydro-3-deoxy-D-gluconate 5-dehydrogenase (264 aa).

An NAD(+)-binding site is contributed by 14–38 (LVTGSTHGLGMAMAKGLGLAGATIV). Residue serine 147 participates in substrate binding. The active-site Proton acceptor is the tyrosine 160.

It belongs to the short-chain dehydrogenases/reductases (SDR) family. Homotetramer.

It localises to the cytoplasm. The catalysed reaction is 2-dehydro-3-deoxy-D-gluconate + NAD(+) = 3-deoxy-D-glycero-2,5-hexodiulosonate + NADH + H(+). 2-dehydro-3-deoxy-D-gluconate 5-dehydrogenase involved in ulvan degradation. Ulvan is the main polysaccharide component of the Ulvales (green seaweed) cell wall. It is composed of disaccharide building blocks comprising 3-sulfated rhamnose (Rha3S) linked to D-glucuronic acid (GlcA), L-iduronic acid (IduA), or D-xylose (Xyl). Catalyzes the reversible reduction of 2,5-diketo-3-deoxygluconate (DKII or 4,6-dihydroxy-2,5-dioxohexanoate) into 2-keto-3-deoxygluconate (KDG or 2-dehydro-3-deoxygluconate) with a concomitant oxidation of NADH. This is 2-dehydro-3-deoxy-D-gluconate 5-dehydrogenase (kduD) from Formosa agariphila (strain DSM 15362 / KCTC 12365 / LMG 23005 / KMM 3901 / M-2Alg 35-1).